A 78-amino-acid chain; its full sequence is Acyl carrier protein (78 aa).

Residues 2 to 77 enclose the Carrier domain; sequence STIEERVKKI…AAIDYINGHQ (76 aa). Ser-37 bears the O-(pantetheine 4'-phosphoryl)serine mark.

The protein belongs to the acyl carrier protein (ACP) family. In terms of processing, 4'-phosphopantetheine is transferred from CoA to a specific serine of apo-ACP by AcpS. This modification is essential for activity because fatty acids are bound in thioester linkage to the sulfhydryl of the prosthetic group.

Its subcellular location is the cytoplasm. It participates in lipid metabolism; fatty acid biosynthesis. Functionally, carrier of the growing fatty acid chain in fatty acid biosynthesis. This is Acyl carrier protein from Shigella flexneri.